A 283-amino-acid chain; its full sequence is uncharacterized protein (283 aa).

Over residues 208-232 (SMENKVNETQNSKEDEKKKNDGDGK) the composition is skewed to basic and acidic residues. Positions 208–237 (SMENKVNETQNSKEDEKKKNDGDGKRSKKK) are disordered.

This is an uncharacterized protein from Saccharomyces cerevisiae (strain ATCC 204508 / S288c) (Baker's yeast).